The sequence spans 286 residues: 2-dehydro-3-deoxyphosphooctonate aldolase (286 aa).

It belongs to the KdsA family.

It is found in the cytoplasm. It catalyses the reaction D-arabinose 5-phosphate + phosphoenolpyruvate + H2O = 3-deoxy-alpha-D-manno-2-octulosonate-8-phosphate + phosphate. Its pathway is carbohydrate biosynthesis; 3-deoxy-D-manno-octulosonate biosynthesis; 3-deoxy-D-manno-octulosonate from D-ribulose 5-phosphate: step 2/3. It participates in bacterial outer membrane biogenesis; lipopolysaccharide biosynthesis. This is 2-dehydro-3-deoxyphosphooctonate aldolase from Haemophilus ducreyi (strain 35000HP / ATCC 700724).